A 199-amino-acid chain; its full sequence is Streptomycin biosynthesis protein StrG (199 aa).

The protein operates within antibiotic biosynthesis; streptomycin biosynthesis. Functionally, may be involved in the formation of N-methyl-L-glucosamine. The polypeptide is Streptomycin biosynthesis protein StrG (strG) (Streptomyces griseus).